We begin with the raw amino-acid sequence, 441 residues long: Mitochondrial distribution and morphology protein 12 (441 aa).

An SMP-LTD domain is found at methionine 1–valine 441. Disordered regions lie at residues aspartate 68–glutamate 89 and arginine 183–glutamate 289. Composition is skewed to polar residues over residues serine 226–threonine 245 and proline 253–glycine 263.

Belongs to the MDM12 family. In terms of assembly, component of the ER-mitochondria encounter structure (ERMES) or MDM complex, composed of MMM1, MDM10, MDM12 and MDM34. An MMM1 homodimer associates with one molecule of MDM12 on each side in a pairwise head-to-tail manner, and the SMP-LTD domains of MMM1 and MDM12 generate a continuous hydrophobic tunnel for phospholipid trafficking.

Its subcellular location is the mitochondrion outer membrane. It localises to the endoplasmic reticulum membrane. In terms of biological role, component of the ERMES/MDM complex, which serves as a molecular tether to connect the endoplasmic reticulum (ER) and mitochondria. Components of this complex are involved in the control of mitochondrial shape and protein biogenesis, and function in nonvesicular lipid trafficking between the ER and mitochondria. MDM12 is required for the interaction of the ER-resident membrane protein MMM1 and the outer mitochondrial membrane-resident beta-barrel protein MDM10. The MDM12-MMM1 subcomplex functions in the major beta-barrel assembly pathway that is responsible for biogenesis of all mitochondrial outer membrane beta-barrel proteins, and acts in a late step after the SAM complex. The MDM10-MDM12-MMM1 subcomplex further acts in the TOM40-specific pathway after the action of the MDM12-MMM1 complex. Essential for establishing and maintaining the structure of mitochondria and maintenance of mtDNA nucleoids. The polypeptide is Mitochondrial distribution and morphology protein 12 (Paracoccidioides lutzii (strain ATCC MYA-826 / Pb01) (Paracoccidioides brasiliensis)).